Reading from the N-terminus, the 197-residue chain is Large ribosomal subunit protein bL25 (197 aa).

This sequence belongs to the bacterial ribosomal protein bL25 family. CTC subfamily. In terms of assembly, part of the 50S ribosomal subunit; part of the 5S rRNA/L5/L18/L25 subcomplex. Contacts the 5S rRNA. Binds to the 5S rRNA independently of L5 and L18.

In terms of biological role, this is one of the proteins that binds to the 5S RNA in the ribosome where it forms part of the central protuberance. In Caulobacter vibrioides (strain ATCC 19089 / CIP 103742 / CB 15) (Caulobacter crescentus), this protein is Large ribosomal subunit protein bL25.